Consider the following 594-residue polypeptide: Protein REBELOTE (594 aa).

A compositionally biased stretch (basic residues) spans 1 to 13 (MGKLGKKARKFAK). Disordered regions lie at residues 1–21 (MGKL…SVEK) and 35–58 (AKRN…PKKR). Short sequence motifs (nuclear localization signal) lie at residues 8–15 (ARKFAKKN), 35–42 (AKRNERHQ), and 512–519 (LKKFHERS). Residues 36–58 (KRNERHQAGDKQEKKVEQQPKKR) show a composition bias toward basic and acidic residues.

The protein belongs to the NOC2 family. In terms of assembly, interacts with SWA2, NOC2 and NOC3 in both the nucleolus and nucleoplasm. Binds to ENAP1 and OBE1. As to expression, expressed at low levels in roots, shoots, leaves, stems, inflorescences, flowers and siliques, with highest levels dividing tissues.

The protein resides in the nucleus. It localises to the nucleolus. Its subcellular location is the nucleoplasm. In terms of biological role, collaboratively with CYP40/SQN and ULT1, influences floral meristem (FM) determinacy in an AGAMOUS and SUPERMAN-dependent manner, thus contributing to the floral developmental homeostasis. In Arabidopsis thaliana (Mouse-ear cress), this protein is Protein REBELOTE.